Reading from the N-terminus, the 268-residue chain is Tryptophan synthase alpha chain (268 aa).

Active-site proton acceptor residues include Glu-49 and Asp-60.

It belongs to the TrpA family. In terms of assembly, tetramer of two alpha and two beta chains.

The catalysed reaction is (1S,2R)-1-C-(indol-3-yl)glycerol 3-phosphate + L-serine = D-glyceraldehyde 3-phosphate + L-tryptophan + H2O. It participates in amino-acid biosynthesis; L-tryptophan biosynthesis; L-tryptophan from chorismate: step 5/5. In terms of biological role, the alpha subunit is responsible for the aldol cleavage of indoleglycerol phosphate to indole and glyceraldehyde 3-phosphate. The polypeptide is Tryptophan synthase alpha chain (Escherichia coli (strain 55989 / EAEC)).